Here is a 51-residue protein sequence, read N- to C-terminus: Ribosome biogenesis protein Nop10 (51 aa).

The protein belongs to the NOP10 family.

Functionally, involved in ribosome biogenesis; more specifically in 18S rRNA pseudouridylation and in cleavage of pre-rRNA. The polypeptide is Ribosome biogenesis protein Nop10 (Methanosarcina barkeri (strain Fusaro / DSM 804)).